We begin with the raw amino-acid sequence, 1204 residues long: Cingulin (1204 aa).

The tract at residues 7–359 (MAEPRGPVDH…VMMSSGSSKA (353 aa)) is head. The segment at 25–48 (EPVSGAEMGTLRRGGRRPAKDARA) is disordered. Residues 48–62 (ASTYGVAVRVQGIAG) carry the ZIM motif. The segment at 54 to 67 (AVRVQGIAGQPFVV) is interaction with TJP1/ZO1. A disordered region spans residues 68–269 (LNSGEKGGDS…SPLSGLSRAR (202 aa)). Residues Ser-95, Ser-96, Ser-98, Ser-135, Ser-137, Ser-140, Ser-155, and Ser-165 each carry the phosphoserine modification. Residues 126–140 (TQWNGKLLRSQSQAS) show a composition bias toward polar residues. The segment covering 166–190 (PGSTIDTAPLSSVDSLINKFDSQLR) has biased composition (polar residues). Over residues 207–231 (EQRKRSKSLDSRLPRDTLEERERQS) the composition is skewed to basic and acidic residues. Phosphoserine is present on residues Ser-214, Ser-217, Ser-260, Ser-278, Ser-340, and Ser-353. Residues 360-1161 (VAGQGELTRK…SLEKDSWRKA (802 aa)) adopt a coiled-coil conformation. The residue at position 581 (Lys-581) is an N6-acetyllysine. The segment at 1156–1182 (DSWRKASRSAAESTLKHEGLSSDEEFD) is disordered. The tract at residues 1162-1204 (SRSAAESTLKHEGLSSDEEFDGVYDPSSIASLLTESNLQTSSC) is tail. A phosphoserine mark is found at Ser-1176 and Ser-1177.

This sequence belongs to the cingulin family. Homodimer. Interacts with TJP1/ZO1 and SPEF1.

The protein resides in the cell junction. Its subcellular location is the tight junction. Probably plays a role in the formation and regulation of the tight junction (TJ) paracellular permeability barrier. This Callithrix jacchus (White-tufted-ear marmoset) protein is Cingulin.